Reading from the N-terminus, the 97-residue chain is YcgL domain-containing protein Tcr_0238 (97 aa).

Residues 3-87 (LLVSAYKSAK…SEIEKMGDMP (85 aa)) enclose the YcgL domain. The disordered stretch occupies residues 78-97 (SEIEKMGDMPPPPEHLDNIF).

This Hydrogenovibrio crunogenus (strain DSM 25203 / XCL-2) (Thiomicrospira crunogena) protein is YcgL domain-containing protein Tcr_0238.